The chain runs to 104 residues: Protamine-3 (104 aa).

Residues 1–104 (MGSRCAKLST…PSPEPKQKHS (104 aa)) are disordered. The segment covering 45 to 70 (EGEEEEEDEEDEEEEDDDEEDEEEEQ) has biased composition (acidic residues). Serine 96 is subject to Phosphoserine.

This sequence belongs to the protamine P3 family. As to expression, testis.

Its subcellular location is the nucleus. It localises to the chromosome. Protamines substitute for histones in the chromatin of sperm during the haploid phase of spermatogenesis. They compact sperm DNA into a highly condensed, stable and inactive complex. This chain is Protamine-3 (Prm3), found in Rattus norvegicus (Rat).